Consider the following 541-residue polypeptide: Chaperonin GroEL 1 (541 aa).

ATP-binding positions include 29–32, 86–90, G413, 479–481, and D495; these read TLGP, DGTTT, and NAA.

This sequence belongs to the chaperonin (HSP60) family. In terms of assembly, forms a cylinder of 14 subunits composed of two heptameric rings stacked back-to-back. Interacts with the co-chaperonin GroES.

The protein resides in the cytoplasm. It carries out the reaction ATP + H2O + a folded polypeptide = ADP + phosphate + an unfolded polypeptide.. Its function is as follows. Together with its co-chaperonin GroES, plays an essential role in assisting protein folding. The GroEL-GroES system forms a nano-cage that allows encapsulation of the non-native substrate proteins and provides a physical environment optimized to promote and accelerate protein folding. This is Chaperonin GroEL 1 from Synechocystis sp. (strain ATCC 27184 / PCC 6803 / Kazusa).